A 626-amino-acid chain; its full sequence is MLGKALLLLLSSPICAWAQSAADYYVKSIPGQPDGPLLKMHAGHVEVDAETNGHLFFWHFQNRHIANRQRTILWLNGGPGCSSMDGALMEIGPYRVKDDHTLIYNNGSWDEFANLLFVDQPVGTGFSYVNTNSYLHDLDHVAAHMITFLEKWFAMFPEYESDDLYIAGESYAGQYIPHIARAIVERNKNIQRNQQHWPIKGLLIGNGWISPRDQYPANLQYAYAEGIVKEGTAIANELDGIEKSCDEQLNAPGAGDLVDIRQCESILNKLLDLTRTSDDQCINVYDIRLKDATCGNAWPPDLDQMTDYLRRADVGAALNLDNGKANGWTECNNQVTANFRMGHNGVPSIQLLPGLIESGVKVLLFSGDRDLICNHLGTESLIHNMKWSGGTGFETKPGVWAPRRGWTFEGEAAGYYQQARNLTYVLFYNASHMVPYDFPRRTRDMVDRFINVDIANIGGPPADSRLDGEKLPQTSVGNTTSSTSGTDQVDEAKLKDAEWKAYTKSGEAALIVVIIGVSVWGFFIWRARQRAARDGTSPTKKGYRAVYQDGVDNNSSTDGAGLLSRFRNQSNSNSSRDLEARDFDEAELDSLTPNLQNGHERDHYVIGEEDEDEDNDIGNGAKSSLH.

The N-terminal stretch at 1 to 18 (MLGKALLLLLSSPICAWA) is a signal peptide. The Lumenal segment spans residues 19–504 (QSAADYYVKS…KDAEWKAYTK (486 aa)). The N-linked (GlcNAc...) asparagine glycan is linked to asparagine 106. Catalysis depends on residues serine 170 and aspartate 370. N-linked (GlcNAc...) asparagine glycosylation is found at asparagine 421 and asparagine 429. The active site involves histidine 432. Residues 460–489 (PPADSRLDGEKLPQTSVGNTTSSTSGTDQV) form a disordered region. Residues 474–486 (TSVGNTTSSTSGT) are compositionally biased toward low complexity. A glycan (N-linked (GlcNAc...) asparagine) is linked at asparagine 478. The helical transmembrane segment at 505-525 (SGEAALIVVIIGVSVWGFFIW) threads the bilayer. Residues 526–626 (RARQRAARDG…IGNGAKSSLH (101 aa)) are Cytoplasmic-facing. 2 disordered regions span residues 558–582 (DGAGLLSRFRNQSNSNSSRDLEARD) and 606–626 (IGEEDEDEDNDIGNGAKSSLH). The span at 564–575 (SRFRNQSNSNSS) shows a compositional bias: low complexity. The segment covering 607–616 (GEEDEDEDND) has biased composition (acidic residues).

Belongs to the peptidase S10 family.

The protein localises to the golgi apparatus. The protein resides in the trans-Golgi network membrane. It carries out the reaction Preferential release of a C-terminal arginine or lysine residue.. In terms of biological role, protease with a carboxypeptidase B-like function involved in the C-terminal processing of the lysine and arginine residues from protein precursors. Promotes cell fusion and is involved in the programmed cell death. The protein is Pheromone-processing carboxypeptidase kex1 (kex1) of Talaromyces marneffei (strain ATCC 18224 / CBS 334.59 / QM 7333) (Penicillium marneffei).